The primary structure comprises 308 residues: tRNA dimethylallyltransferase (308 aa).

11 to 18 (GPTGIGKT) lines the ATP pocket. 13-18 (TGIGKT) contributes to the substrate binding site. Residues 36-39 (DSMQ) form an interaction with substrate tRNA region.

This sequence belongs to the IPP transferase family. In terms of assembly, monomer. Requires Mg(2+) as cofactor.

It catalyses the reaction adenosine(37) in tRNA + dimethylallyl diphosphate = N(6)-dimethylallyladenosine(37) in tRNA + diphosphate. Functionally, catalyzes the transfer of a dimethylallyl group onto the adenine at position 37 in tRNAs that read codons beginning with uridine, leading to the formation of N6-(dimethylallyl)adenosine (i(6)A). This Lactobacillus gasseri (strain ATCC 33323 / DSM 20243 / BCRC 14619 / CIP 102991 / JCM 1131 / KCTC 3163 / NCIMB 11718 / NCTC 13722 / AM63) protein is tRNA dimethylallyltransferase.